Consider the following 105-residue polypeptide: Urease subunit beta (105 aa).

The protein belongs to the urease beta subunit family. In terms of assembly, heterotrimer of UreA (gamma), UreB (beta) and UreC (alpha) subunits. Three heterotrimers associate to form the active enzyme.

The protein resides in the cytoplasm. The enzyme catalyses urea + 2 H2O + H(+) = hydrogencarbonate + 2 NH4(+). It participates in nitrogen metabolism; urea degradation; CO(2) and NH(3) from urea (urease route): step 1/1. The chain is Urease subunit beta from Marinobacter nauticus (strain ATCC 700491 / DSM 11845 / VT8) (Marinobacter aquaeolei).